Here is a 272-residue protein sequence, read N- to C-terminus: tRNA pseudouridine synthase B (272 aa).

Residue aspartate 38 is the Nucleophile of the active site.

The protein belongs to the pseudouridine synthase TruB family. Type 1 subfamily.

The catalysed reaction is uridine(55) in tRNA = pseudouridine(55) in tRNA. Responsible for synthesis of pseudouridine from uracil-55 in the psi GC loop of transfer RNAs. The chain is tRNA pseudouridine synthase B from Campylobacter jejuni (strain RM1221).